A 156-amino-acid polypeptide reads, in one-letter code: Small ribosomal subunit protein uS7c (156 aa).

This sequence belongs to the universal ribosomal protein uS7 family. Part of the 30S ribosomal subunit.

It is found in the plastid. The protein localises to the chloroplast. Functionally, one of the primary rRNA binding proteins, it binds directly to 16S rRNA where it nucleates assembly of the head domain of the 30S subunit. In Zamia furfuracea (Cardboard cycad), this protein is Small ribosomal subunit protein uS7c (rps7).